The chain runs to 637 residues: tRNA-dihydrouridine(47) synthase [NAD(P)(+)]-like (637 aa).

Disordered regions lie at residues 1 to 21 (MAETAAESGGGGDSGVGACER), 41 to 63 (LDGDKQEGACQEVPTGDPAEPGA), and 85 to 105 (ERQVPKRARGQNKSRPHVKPA). Positions 89-104 (PKRARGQNKSRPHVKP) are enriched in basic residues. C3H1-type zinc fingers lie at residues 107-137 (YDKDRLCPSFLQEPATPCAFGDRCRFLHDVG) and 145-175 (ADLGPRCVLFETFGRCPFSMTCRFAGAHLGP). T260 bears the Phosphothreonine mark. 2 positions are modified to phosphoserine: S263 and S264. Residues 298-300 (PLT) and Q352 contribute to the FMN site. The Proton donor role is filled by C383. K403 is covalently cross-linked (Glycyl lysine isopeptide (Lys-Gly) (interchain with G-Cter in SUMO2)). FMN contacts are provided by residues K422, H452, 484–486 (NGD), and 507–508 (AR).

This sequence belongs to the Dus family. Dus3 subfamily. FMN is required as a cofactor.

The catalysed reaction is 5,6-dihydrouridine(47) in tRNA + NAD(+) = uridine(47) in tRNA + NADH + H(+). It carries out the reaction 5,6-dihydrouridine(47) in tRNA + NADP(+) = uridine(47) in tRNA + NADPH + H(+). The enzyme catalyses a 5,6-dihydrouridine in mRNA + NAD(+) = a uridine in mRNA + NADH + H(+). It catalyses the reaction a 5,6-dihydrouridine in mRNA + NADP(+) = a uridine in mRNA + NADPH + H(+). Catalyzes the synthesis of dihydrouridine, a modified base, in various RNAs, such as tRNAs, mRNAs and some long non-coding RNAs (lncRNAs). Mainly modifies the uridine in position 47 (U47) in the D-loop of most cytoplasmic tRNAs. Also able to mediate the formation of dihydrouridine in some mRNAs, thereby regulating their translation. The polypeptide is tRNA-dihydrouridine(47) synthase [NAD(P)(+)]-like (Mus musculus (Mouse)).